The chain runs to 798 residues: Copalyl diphosphate synthase 1, chloroplastic (798 aa).

Residues 1–72 constitute a chloroplast transit peptide; sequence MASLSTMHLI…SKVAGINRVA (72 aa). Position 251 (lysine 251) interacts with substrate. 2 residues coordinate Mg(2+): aspartate 383 and aspartate 385. The short motif at 383-386 is the DXDD motif element; it reads DIDD. Lysine 469 contributes to the substrate binding site.

This sequence belongs to the terpene synthase family. Tpsc subfamily. Mg(2+) is required as a cofactor. Highly expressed in roots, and, at low levels, in stems and leaves.

The protein resides in the plastid. It localises to the chloroplast. It carries out the reaction (2E,6E,10E)-geranylgeranyl diphosphate = (+)-copalyl diphosphate. The protein operates within secondary metabolite biosynthesis; terpenoid biosynthesis. Its function is as follows. Involved in the biosynthesis of ent-kaurene diterpenoids natural products such as oridonin, miltiradiene, eriocalyxin B and nezukol, known to exhibit antitumor, anti-inflammatory and antibacterial activities. Catalyzes the conversion of (2E,6E,10E)-geranylgeranyl diphosphate (GGPP) to (+)-copalyl diphosphate ((+)-CPP). The protein is Copalyl diphosphate synthase 1, chloroplastic of Isodon rubescens (Rabdosia rubescens).